The following is a 144-amino-acid chain: Large ribosomal subunit protein uL13 (144 aa).

The protein belongs to the universal ribosomal protein uL13 family. As to quaternary structure, part of the 50S ribosomal subunit.

Its function is as follows. This protein is one of the early assembly proteins of the 50S ribosomal subunit, although it is not seen to bind rRNA by itself. It is important during the early stages of 50S assembly. This Mycoplasma mobile (strain ATCC 43663 / 163K / NCTC 11711) (Mesomycoplasma mobile) protein is Large ribosomal subunit protein uL13.